The primary structure comprises 607 residues: Glutamine--fructose-6-phosphate aminotransferase [isomerizing] (607 aa).

The active-site Nucleophile; for GATase activity is the Cys-2. Residues 2–217 (CGIIGIIGND…DGDWAVLTRN (216 aa)) enclose the Glutamine amidotransferase type-2 domain. 2 SIS domains span residues 283-422 (IGID…ARGA) and 455-597 (VCHD…VDQP). The For Fru-6P isomerization activity role is filled by Lys-602.

In terms of assembly, homodimer.

It localises to the cytoplasm. The enzyme catalyses D-fructose 6-phosphate + L-glutamine = D-glucosamine 6-phosphate + L-glutamate. In terms of biological role, catalyzes the first step in hexosamine metabolism, converting fructose-6P into glucosamine-6P using glutamine as a nitrogen source. In Brucella abortus biovar 1 (strain 9-941), this protein is Glutamine--fructose-6-phosphate aminotransferase [isomerizing].